A 643-amino-acid chain; its full sequence is Protein ecdysoneless homolog (643 aa).

Disordered stretches follow at residues 428–458 and 501–600; these read EFYN…NNFD and IESM…FTPV. The segment covering 446-456 has biased composition (polar residues); that stretch reads AGSSSDANMNN. Acidic residues predominate over residues 528–543; the sequence is MDFDDVEDDSEGEESN. Over residues 564 to 580 the composition is skewed to polar residues; the sequence is NSTLEKSFENVNQQHSS. Residues 581–592 show a composition bias toward basic and acidic residues; sequence KQNEESSKTRDE.

It belongs to the ECD family.

This is Protein ecdysoneless homolog from Arabidopsis thaliana (Mouse-ear cress).